The primary structure comprises 430 residues: Gamma-glutamyl phosphate reductase (430 aa).

The protein belongs to the gamma-glutamyl phosphate reductase family.

It is found in the cytoplasm. It carries out the reaction L-glutamate 5-semialdehyde + phosphate + NADP(+) = L-glutamyl 5-phosphate + NADPH + H(+). It participates in amino-acid biosynthesis; L-proline biosynthesis; L-glutamate 5-semialdehyde from L-glutamate: step 2/2. Functionally, catalyzes the NADPH-dependent reduction of L-glutamate 5-phosphate into L-glutamate 5-semialdehyde and phosphate. The product spontaneously undergoes cyclization to form 1-pyrroline-5-carboxylate. The sequence is that of Gamma-glutamyl phosphate reductase from Rhodopseudomonas palustris (strain BisB5).